The following is a 210-amino-acid chain: Ribosomal RNA small subunit methyltransferase G (210 aa).

S-adenosyl-L-methionine-binding positions include Gly76, Leu81, 127 to 128 (VE), and Arg142.

It belongs to the methyltransferase superfamily. RNA methyltransferase RsmG family.

The protein localises to the cytoplasm. The enzyme catalyses guanosine(527) in 16S rRNA + S-adenosyl-L-methionine = N(7)-methylguanosine(527) in 16S rRNA + S-adenosyl-L-homocysteine. In terms of biological role, specifically methylates the N7 position of guanine in position 527 of 16S rRNA. This is Ribosomal RNA small subunit methyltransferase G from Aliivibrio fischeri (strain ATCC 700601 / ES114) (Vibrio fischeri).